The chain runs to 529 residues: Bifunctional purine biosynthesis protein PurH (529 aa).

The 151-residue stretch at 8–158 (PSAPDLVAPK…KNHGYVAVCT (151 aa)) folds into the MGS-like domain.

It belongs to the PurH family.

It catalyses the reaction (6R)-10-formyltetrahydrofolate + 5-amino-1-(5-phospho-beta-D-ribosyl)imidazole-4-carboxamide = 5-formamido-1-(5-phospho-D-ribosyl)imidazole-4-carboxamide + (6S)-5,6,7,8-tetrahydrofolate. It carries out the reaction IMP + H2O = 5-formamido-1-(5-phospho-D-ribosyl)imidazole-4-carboxamide. It functions in the pathway purine metabolism; IMP biosynthesis via de novo pathway; 5-formamido-1-(5-phospho-D-ribosyl)imidazole-4-carboxamide from 5-amino-1-(5-phospho-D-ribosyl)imidazole-4-carboxamide (10-formyl THF route): step 1/1. Its pathway is purine metabolism; IMP biosynthesis via de novo pathway; IMP from 5-formamido-1-(5-phospho-D-ribosyl)imidazole-4-carboxamide: step 1/1. The protein is Bifunctional purine biosynthesis protein PurH of Caulobacter vibrioides (strain ATCC 19089 / CIP 103742 / CB 15) (Caulobacter crescentus).